We begin with the raw amino-acid sequence, 225 residues long: Phosphoribosyltransferase domain-containing protein 1 (225 aa).

Position 2 is an N-acetylalanine (A2). Positions 141 and 142 each coordinate Mg(2+). Residues 141–149, K173, 194–195, and D201 contribute to the GMP site; these read EDVVGTGRT and FV. D201 contributes to the Mg(2+) binding site.

Belongs to the purine/pyrimidine phosphoribosyltransferase family. Homodimer.

Has low, barely detectable phosphoribosyltransferase activity (in vitro). Binds GMP, IMP and alpha-D-5-phosphoribosyl 1-pyrophosphate (PRPP). Is not expected to contribute to purine metabolism or GMP salvage. The chain is Phosphoribosyltransferase domain-containing protein 1 (PRTFDC1) from Homo sapiens (Human).